The chain runs to 314 residues: tRNA dimethylallyltransferase (314 aa).

12 to 19 is an ATP binding site; the sequence is GPTGTGKS. 14–19 is a binding site for substrate; it reads TGTGKS.

This sequence belongs to the IPP transferase family. Monomer. The cofactor is Mg(2+).

It catalyses the reaction adenosine(37) in tRNA + dimethylallyl diphosphate = N(6)-dimethylallyladenosine(37) in tRNA + diphosphate. Its function is as follows. Catalyzes the transfer of a dimethylallyl group onto the adenine at position 37 in tRNAs that read codons beginning with uridine, leading to the formation of N6-(dimethylallyl)adenosine (i(6)A). This is tRNA dimethylallyltransferase from Mycolicibacterium paratuberculosis (strain ATCC BAA-968 / K-10) (Mycobacterium paratuberculosis).